We begin with the raw amino-acid sequence, 253 residues long: Ditrans,polycis-undecaprenyl-diphosphate synthase ((2E,6E)-farnesyl-diphosphate specific) (253 aa).

Aspartate 26 is a catalytic residue. Aspartate 26 lines the Mg(2+) pocket. Substrate contacts are provided by residues 27–30, tryptophan 31, arginine 39, histidine 43, and 71–73; these read GNGR and SSE. Asparagine 74 functions as the Proton acceptor in the catalytic mechanism. Substrate contacts are provided by tryptophan 75, arginine 77, and arginine 194. Residue histidine 199 participates in Mg(2+) binding. 200-202 serves as a coordination point for substrate; the sequence is RIS. Residue glutamate 213 coordinates Mg(2+).

The protein belongs to the UPP synthase family. As to quaternary structure, homodimer. The cofactor is Mg(2+).

The enzyme catalyses 8 isopentenyl diphosphate + (2E,6E)-farnesyl diphosphate = di-trans,octa-cis-undecaprenyl diphosphate + 8 diphosphate. Its function is as follows. Catalyzes the sequential condensation of isopentenyl diphosphate (IPP) with (2E,6E)-farnesyl diphosphate (E,E-FPP) to yield (2Z,6Z,10Z,14Z,18Z,22Z,26Z,30Z,34E,38E)-undecaprenyl diphosphate (di-trans,octa-cis-UPP). UPP is the precursor of glycosyl carrier lipid in the biosynthesis of bacterial cell wall polysaccharide components such as peptidoglycan and lipopolysaccharide. In Shigella flexneri, this protein is Ditrans,polycis-undecaprenyl-diphosphate synthase ((2E,6E)-farnesyl-diphosphate specific).